Consider the following 414-residue polypeptide: Serine/threonine transporter SstT (414 aa).

Helical transmembrane passes span 16–36 (GSLV…AWVS), 46–66 (LGTL…LMLV), 84–104 (ILFL…VFSF), 143–163 (ALLN…GFAL), 180–200 (AVTF…FGLV), 219–239 (LVVL…LLVF), 300–320 (MAGA…TLGV), and 332–352 (VVAS…LLLI).

Belongs to the dicarboxylate/amino acid:cation symporter (DAACS) (TC 2.A.23) family.

It is found in the cell inner membrane. The enzyme catalyses L-serine(in) + Na(+)(in) = L-serine(out) + Na(+)(out). The catalysed reaction is L-threonine(in) + Na(+)(in) = L-threonine(out) + Na(+)(out). Functionally, involved in the import of serine and threonine into the cell, with the concomitant import of sodium (symport system). The sequence is that of Serine/threonine transporter SstT from Salmonella arizonae (strain ATCC BAA-731 / CDC346-86 / RSK2980).